A 152-amino-acid chain; its full sequence is MAKRVQLVLKEDILSLGKDGDVVEVAPGYARNFLLPHGKALPVTPAVMKQVEHRRAKQKEHEAALKDEALAFETALKTIGRFTVKKQVGDDGVLFGTVTNGDIAEAIEKATEKEIDRRTISVPEVHAIGQYKVQIKLHHEVTAEINLEVVSY.

The protein belongs to the bacterial ribosomal protein bL9 family.

Functionally, binds to the 23S rRNA. This is Large ribosomal subunit protein bL9 from Prochlorococcus marinus (strain MIT 9211).